We begin with the raw amino-acid sequence, 118 residues long: Small ribosomal subunit protein uS13 (118 aa).

The interval 91-118 (HRRGLPVRGQRTKTNARTRKGPRKPIKK) is disordered.

Belongs to the universal ribosomal protein uS13 family. In terms of assembly, part of the 30S ribosomal subunit. Forms a loose heterodimer with protein S19. Forms two bridges to the 50S subunit in the 70S ribosome.

Located at the top of the head of the 30S subunit, it contacts several helices of the 16S rRNA. In the 70S ribosome it contacts the 23S rRNA (bridge B1a) and protein L5 of the 50S subunit (bridge B1b), connecting the 2 subunits; these bridges are implicated in subunit movement. Contacts the tRNAs in the A and P-sites. The polypeptide is Small ribosomal subunit protein uS13 (Photorhabdus laumondii subsp. laumondii (strain DSM 15139 / CIP 105565 / TT01) (Photorhabdus luminescens subsp. laumondii)).